Reading from the N-terminus, the 191-residue chain is INO80 complex subunit C (191 aa).

The segment at 1–41 (MAAQIPIVAATSTPAVARNSKKRPASPSHNSSGGGYGASKK) is disordered.

In terms of assembly, component of the chromatin remodeling INO80 complex; specifically part of a complex module associated with the helicase ATP-binding and the helicase C-terminal domain of INO80. Component of some MLL1/MLL complex, at least composed of the core components KMT2A/MLL1, ASH2L, HCFC1/HCF1, WDR5 and RBBP5, as well as the facultative components BACC1, CHD8, E2F6, HSP70, INO80C, KANSL1, LAS1L, MAX, MCRS1, MGA, MYST1/MOF, PELP1, PHF20, PRP31, RING2, RUVB1/TIP49A, RUVB2/TIP49B, SENP3, TAF1, TAF4, TAF6, TAF7, TAF9 and TEX10.

It localises to the nucleus. Proposed core component of the chromatin remodeling INO80 complex which is involved in transcriptional regulation, DNA replication and probably DNA repair. This is INO80 complex subunit C (Ino80c) from Mus musculus (Mouse).